We begin with the raw amino-acid sequence, 80 residues long: Small ribosomal subunit protein uS17 (80 aa).

The protein belongs to the universal ribosomal protein uS17 family. As to quaternary structure, part of the 30S ribosomal subunit.

Its function is as follows. One of the primary rRNA binding proteins, it binds specifically to the 5'-end of 16S ribosomal RNA. The sequence is that of Small ribosomal subunit protein uS17 from Brucella anthropi (strain ATCC 49188 / DSM 6882 / CCUG 24695 / JCM 21032 / LMG 3331 / NBRC 15819 / NCTC 12168 / Alc 37) (Ochrobactrum anthropi).